Reading from the N-terminus, the 142-residue chain is Transcription antitermination protein NusB (142 aa).

This sequence belongs to the NusB family.

Functionally, involved in transcription antitermination. Required for transcription of ribosomal RNA (rRNA) genes. Binds specifically to the boxA antiterminator sequence of the ribosomal RNA (rrn) operons. In Anaeromyxobacter dehalogenans (strain 2CP-1 / ATCC BAA-258), this protein is Transcription antitermination protein NusB.